The chain runs to 711 residues: Ent-copalyl diphosphate synthase 1 (711 aa).

Lys-145 provides a ligand contact to substrate. Asp-277 and Asp-279 together coordinate Mg(2+). Residues Asp-277–Asp-280 carry the DXDD motif motif. Lys-364 contacts substrate.

The protein belongs to the terpene synthase family. Tpsc subfamily. Requires Mg(2+) as cofactor.

The enzyme catalyses (2E,6E,10E)-geranylgeranyl diphosphate = ent-copalyl diphosphate. Its pathway is secondary metabolite biosynthesis; terpenoid biosynthesis. Functionally, involved in the biosynthesis of ent-kaurene diterpenoids natural products such as oridonin, miltiradiene, eriocalyxin B and nezukol, known to exhibit antitumor, anti-inflammatory and antibacterial activities. Catalyzes the conversion of (2E,6E,10E)-geranylgeranyl diphosphate (GGPP) to ent-copalyl diphosphate (ent-CPP). This is Ent-copalyl diphosphate synthase 1 from Isodon japonicus (Scutellaria japonica).